The primary structure comprises 218 residues: Small ribosomal subunit protein uS3c (218 aa).

One can recognise a KH type-2 domain in the interval 47–118; sequence VYKNIRNSSN…KLRMTLTEVT (72 aa).

Belongs to the universal ribosomal protein uS3 family. In terms of assembly, part of the 30S ribosomal subunit.

It is found in the plastid. Its subcellular location is the chloroplast. In Physcomitrium patens (Spreading-leaved earth moss), this protein is Small ribosomal subunit protein uS3c (rps3).